A 418-amino-acid polypeptide reads, in one-letter code: MSGSTLLKETGPREVFCGLTSIVWLHRRMPDAFFLVVGSRTCAHLIQSAAGVMIFAEPRFGTAILEERDLAGLADAHEELDRVVKSLLKRRPEIRTLFLVGSCPSEVIKIDLSRAAERLSSQFNGQVRILNYSGSGIETTFTQGEDGALKALVPLMPSSQEEQLLLAGTLANPVEDRLKTIFNRLGIQKVESFPPRESTKLPAIGPGTKVLLAQPYLTDTARELKDRGAEILQAPFPLGVEGSQLWIEAAANAFKIKKTLVDATLEPLITRAHKALKPYVEQLSGKKLFLLPESQLEIPLARFLSNECGMKLIEVGVPYLNREMMGPELDLLPQNTRIVEGQHVEKQLDRVREHHPDLVVCGMGLANPLEAEGISTKWSIEMVFSPIHGIDQASDLAELFARPLHRQNLLNKKTLEAV.

The [4Fe-4S] cluster site is built by Cys-17, Cys-42, and Cys-103.

Belongs to the BchN/ChlN family. As to quaternary structure, protochlorophyllide reductase is composed of three subunits; ChlL, ChlN and ChlB. Forms a heterotetramer of two ChlB and two ChlN subunits. Requires [4Fe-4S] cluster as cofactor.

The enzyme catalyses chlorophyllide a + oxidized 2[4Fe-4S]-[ferredoxin] + 2 ADP + 2 phosphate = protochlorophyllide a + reduced 2[4Fe-4S]-[ferredoxin] + 2 ATP + 2 H2O. It participates in porphyrin-containing compound metabolism; chlorophyll biosynthesis (light-independent). In terms of biological role, component of the dark-operative protochlorophyllide reductase (DPOR) that uses Mg-ATP and reduced ferredoxin to reduce ring D of protochlorophyllide (Pchlide) to form chlorophyllide a (Chlide). This reaction is light-independent. The NB-protein (ChlN-ChlB) is the catalytic component of the complex. This is Light-independent protochlorophyllide reductase subunit N from Prochlorococcus marinus (strain SARG / CCMP1375 / SS120).